The primary structure comprises 194 residues: Holliday junction branch migration complex subunit RuvA (194 aa).

The segment at 1–64 (MIGRLRGILA…EDSVALYGFL (64 aa)) is domain I. Residues 65–140 (REGERRLFRD…RAADFSSGAP (76 aa)) form a domain II region. Positions 140-144 (PITGQ) are flexible linker. Positions 145-194 (LGPDAVSEATVALQQLGYKPAEAARMARDAGAEGDEVATVIRKALQAALR) are domain III.

This sequence belongs to the RuvA family. As to quaternary structure, homotetramer. Forms an RuvA(8)-RuvB(12)-Holliday junction (HJ) complex. HJ DNA is sandwiched between 2 RuvA tetramers; dsDNA enters through RuvA and exits via RuvB. An RuvB hexamer assembles on each DNA strand where it exits the tetramer. Each RuvB hexamer is contacted by two RuvA subunits (via domain III) on 2 adjacent RuvB subunits; this complex drives branch migration. In the full resolvosome a probable DNA-RuvA(4)-RuvB(12)-RuvC(2) complex forms which resolves the HJ.

Its subcellular location is the cytoplasm. Functionally, the RuvA-RuvB-RuvC complex processes Holliday junction (HJ) DNA during genetic recombination and DNA repair, while the RuvA-RuvB complex plays an important role in the rescue of blocked DNA replication forks via replication fork reversal (RFR). RuvA specifically binds to HJ cruciform DNA, conferring on it an open structure. The RuvB hexamer acts as an ATP-dependent pump, pulling dsDNA into and through the RuvAB complex. HJ branch migration allows RuvC to scan DNA until it finds its consensus sequence, where it cleaves and resolves the cruciform DNA. The sequence is that of Holliday junction branch migration complex subunit RuvA from Xanthomonas euvesicatoria pv. vesicatoria (strain 85-10) (Xanthomonas campestris pv. vesicatoria).